An 82-amino-acid polypeptide reads, in one-letter code: Small ribosomal subunit protein bS16 (82 aa).

It belongs to the bacterial ribosomal protein bS16 family.

The polypeptide is Small ribosomal subunit protein bS16 (Francisella philomiragia subsp. philomiragia (strain ATCC 25017 / CCUG 19701 / FSC 153 / O#319-036)).